The primary structure comprises 1104 residues: Isoleucine--tRNA ligase (1104 aa).

The short motif at 48–58 (PYTTGRIHLGT) is the 'HIGH' region element. Residues 644-648 (KMSKS) carry the 'KMSKS' region motif. ATP is bound at residue lysine 647.

This sequence belongs to the class-I aminoacyl-tRNA synthetase family. IleS type 2 subfamily. In terms of assembly, monomer. Zn(2+) is required as a cofactor.

It localises to the cytoplasm. The enzyme catalyses tRNA(Ile) + L-isoleucine + ATP = L-isoleucyl-tRNA(Ile) + AMP + diphosphate. In terms of biological role, catalyzes the attachment of isoleucine to tRNA(Ile). As IleRS can inadvertently accommodate and process structurally similar amino acids such as valine, to avoid such errors it has two additional distinct tRNA(Ile)-dependent editing activities. One activity is designated as 'pretransfer' editing and involves the hydrolysis of activated Val-AMP. The other activity is designated 'posttransfer' editing and involves deacylation of mischarged Val-tRNA(Ile). The sequence is that of Isoleucine--tRNA ligase from Methanocella arvoryzae (strain DSM 22066 / NBRC 105507 / MRE50).